A 310-amino-acid polypeptide reads, in one-letter code: Tyrosine recombinase XerC (310 aa).

The region spanning 11 to 97 is the Core-binding (CB) domain; it reads NSLQKPLSRF…SLRSFFDFLV (87 aa). The 181-residue stretch at 118–298 folds into the Tyr recombinase domain; it reads PLPKNLDVDE…DFQHLAQAYD (181 aa). Catalysis depends on residues Arg157, Lys181, His250, Arg253, and His276. The O-(3'-phospho-DNA)-tyrosine intermediate role is filled by Tyr285.

This sequence belongs to the 'phage' integrase family. XerC subfamily. As to quaternary structure, forms a cyclic heterotetrameric complex composed of two molecules of XerC and two molecules of XerD.

The protein localises to the cytoplasm. In terms of biological role, site-specific tyrosine recombinase, which acts by catalyzing the cutting and rejoining of the recombining DNA molecules. The XerC-XerD complex is essential to convert dimers of the bacterial chromosome into monomers to permit their segregation at cell division. It also contributes to the segregational stability of plasmids. In Vibrio atlanticus (strain LGP32) (Vibrio splendidus (strain Mel32)), this protein is Tyrosine recombinase XerC.